A 268-amino-acid polypeptide reads, in one-letter code: 3-methyl-2-oxobutanoate hydroxymethyltransferase (268 aa).

Mg(2+)-binding residues include aspartate 46 and aspartate 85. Residues 46-47 (DS), aspartate 85, and lysine 115 each bind 3-methyl-2-oxobutanoate. Glutamate 117 is a binding site for Mg(2+). Glutamate 184 (proton acceptor) is an active-site residue.

The protein belongs to the PanB family. In terms of assembly, homodecamer; pentamer of dimers. Mg(2+) serves as cofactor.

The protein resides in the cytoplasm. The enzyme catalyses 3-methyl-2-oxobutanoate + (6R)-5,10-methylene-5,6,7,8-tetrahydrofolate + H2O = 2-dehydropantoate + (6S)-5,6,7,8-tetrahydrofolate. It functions in the pathway cofactor biosynthesis; (R)-pantothenate biosynthesis; (R)-pantoate from 3-methyl-2-oxobutanoate: step 1/2. In terms of biological role, catalyzes the reversible reaction in which hydroxymethyl group from 5,10-methylenetetrahydrofolate is transferred onto alpha-ketoisovalerate to form ketopantoate. This Magnetococcus marinus (strain ATCC BAA-1437 / JCM 17883 / MC-1) protein is 3-methyl-2-oxobutanoate hydroxymethyltransferase.